Consider the following 194-residue polypeptide: Outer surface 22 kDa lipoprotein (194 aa).

The N-terminal stretch at 1–21 is a signal peptide; sequence MYKNGFFKNYLSLFLIFLVIA. Cysteine 22 carries N-palmitoyl cysteine lipidation. Cysteine 22 is lipidated: S-diacylglycerol cysteine.

The protein localises to the cell outer membrane. The polypeptide is Outer surface 22 kDa lipoprotein (p22) (Borreliella burgdorferi (strain ZS7) (Borrelia burgdorferi)).